We begin with the raw amino-acid sequence, 355 residues long: NADH-quinone oxidoreductase subunit H (355 aa).

The next 8 membrane-spanning stretches (helical) occupy residues 17–37, 86–106, 119–139, 165–185, 204–224, 262–282, 291–311, and 332–352; these read IIMV…IAYI, GVFL…WAVI, VGIL…IMAG, IGFV…SAVV, ILNW…VSAL, YVAI…GWLP, WVPG…LFAM, and FLPL…FAGI.

This sequence belongs to the complex I subunit 1 family. In terms of assembly, NDH-1 is composed of 14 different subunits. Subunits NuoA, H, J, K, L, M, N constitute the membrane sector of the complex.

It is found in the cell inner membrane. The enzyme catalyses a quinone + NADH + 5 H(+)(in) = a quinol + NAD(+) + 4 H(+)(out). Functionally, NDH-1 shuttles electrons from NADH, via FMN and iron-sulfur (Fe-S) centers, to quinones in the respiratory chain. The immediate electron acceptor for the enzyme in this species is believed to be ubiquinone. Couples the redox reaction to proton translocation (for every two electrons transferred, four hydrogen ions are translocated across the cytoplasmic membrane), and thus conserves the redox energy in a proton gradient. This subunit may bind ubiquinone. The protein is NADH-quinone oxidoreductase subunit H of Bradyrhizobium diazoefficiens (strain JCM 10833 / BCRC 13528 / IAM 13628 / NBRC 14792 / USDA 110).